Here is a 316-residue protein sequence, read N- to C-terminus: Acetaldehyde dehydrogenase (316 aa).

11-14 serves as a coordination point for NAD(+); sequence SGNI. The active-site Acyl-thioester intermediate is the C131. NAD(+) is bound by residues 162–170 and N289; that span reads SAGPGTRAN.

The protein belongs to the acetaldehyde dehydrogenase family. In terms of assembly, interacts with MhpE.

The enzyme catalyses acetaldehyde + NAD(+) + CoA = acetyl-CoA + NADH + H(+). It functions in the pathway aromatic compound metabolism; 3-phenylpropanoate degradation. In terms of biological role, catalyzes the conversion of acetaldehyde to acetyl-CoA, using NAD(+) and coenzyme A. Is the final enzyme in the meta-cleavage pathway for the degradation of aromatic compounds. The chain is Acetaldehyde dehydrogenase from Escherichia coli O157:H7.